Reading from the N-terminus, the 63-residue chain is 2-hydroxymuconate tautomerase (63 aa).

The Proton acceptor; via imino nitrogen role is filled by proline 2.

The protein belongs to the 4-oxalocrotonate tautomerase family. Homohexamer.

It carries out the reaction (2Z,4E)-2-hydroxyhexa-2,4-dienedioate = (3E)-2-oxohex-3-enedioate. The protein operates within aromatic compound metabolism; salicylate degradation. Functionally, catalyzes the ketonization of 2-hydroxymuconate stereoselectively to yield 2-oxo-3-hexenedioate. This chain is 2-hydroxymuconate tautomerase (nahJ), found in Pseudomonas putida (Arthrobacter siderocapsulatus).